The sequence spans 509 residues: Maturase K (509 aa).

The protein belongs to the intron maturase 2 family. MatK subfamily.

It is found in the plastid. The protein localises to the chloroplast. Usually encoded in the trnK tRNA gene intron. Probably assists in splicing its own and other chloroplast group II introns. This Banksia cuneata (Quairading banksia) protein is Maturase K.